Consider the following 357-residue polypeptide: 3-isopropylmalate dehydrogenase, chloroplastic (357 aa).

The transit peptide at 1 to 29 directs the protein to the chloroplast; it reads MALQIAKRLLRCRADSVASSVRFFDRTFT. Arginine 120, arginine 130, arginine 151, and aspartate 238 together coordinate substrate. Mg(2+) is bound by residues aspartate 238, aspartate 262, and aspartate 266. 296–308 provides a ligand contact to NAD(+); the sequence is GSAPDIAGKNLAN.

It belongs to the isocitrate and isopropylmalate dehydrogenases family. In terms of assembly, homodimer. Requires Mg(2+) as cofactor. Mn(2+) is required as a cofactor.

It localises to the plastid. The protein localises to the chloroplast. The catalysed reaction is (2R,3S)-3-isopropylmalate + NAD(+) = 4-methyl-2-oxopentanoate + CO2 + NADH. It functions in the pathway amino-acid biosynthesis; L-leucine biosynthesis; L-leucine from 3-methyl-2-oxobutanoate: step 3/4. Functionally, catalyzes the oxidation of 3-carboxy-2-hydroxy-4-methylpentanoate (3-isopropylmalate) to 3-carboxy-4-methyl-2-oxopentanoate. The product decarboxylates to 4-methyl-2 oxopentanoate. The sequence is that of 3-isopropylmalate dehydrogenase, chloroplastic from Solanum tuberosum (Potato).